Consider the following 386-residue polypeptide: Succinate--CoA ligase [ADP-forming] subunit beta (386 aa).

The ATP-grasp domain occupies K9–E244. ATP contacts are provided by residues K46, G53 to G55, E99, A102, and E107. Mg(2+)-binding residues include N199 and D213. Substrate-binding positions include N264 and G321 to M323.

This sequence belongs to the succinate/malate CoA ligase beta subunit family. Heterotetramer of two alpha and two beta subunits. It depends on Mg(2+) as a cofactor.

It carries out the reaction succinate + ATP + CoA = succinyl-CoA + ADP + phosphate. The enzyme catalyses GTP + succinate + CoA = succinyl-CoA + GDP + phosphate. It functions in the pathway carbohydrate metabolism; tricarboxylic acid cycle; succinate from succinyl-CoA (ligase route): step 1/1. In terms of biological role, succinyl-CoA synthetase functions in the citric acid cycle (TCA), coupling the hydrolysis of succinyl-CoA to the synthesis of either ATP or GTP and thus represents the only step of substrate-level phosphorylation in the TCA. The beta subunit provides nucleotide specificity of the enzyme and binds the substrate succinate, while the binding sites for coenzyme A and phosphate are found in the alpha subunit. The polypeptide is Succinate--CoA ligase [ADP-forming] subunit beta (Polaromonas sp. (strain JS666 / ATCC BAA-500)).